The sequence spans 93 residues: Small ribosomal subunit protein bS20 (93 aa).

Basic and acidic residues predominate over residues 1–18 (MPLHKSAEKRLRQSEKRN). A disordered region spans residues 1–25 (MPLHKSAEKRLRQSEKRNARNRARK).

It belongs to the bacterial ribosomal protein bS20 family.

Its function is as follows. Binds directly to 16S ribosomal RNA. In Chlorobium chlorochromatii (strain CaD3), this protein is Small ribosomal subunit protein bS20.